Reading from the N-terminus, the 654-residue chain is Probable Xaa-Pro aminopeptidase P (654 aa).

Mn(2+) is bound by residues Asp449, Asp460, Glu558, and Glu572.

The protein belongs to the peptidase M24B family. Mn(2+) serves as cofactor.

It carries out the reaction Release of any N-terminal amino acid, including proline, that is linked to proline, even from a dipeptide or tripeptide.. Catalyzes the removal of a penultimate prolyl residue from the N-termini of peptides. The protein is Probable Xaa-Pro aminopeptidase P (ampp) of Aspergillus fumigatus (strain CBS 144.89 / FGSC A1163 / CEA10) (Neosartorya fumigata).